A 562-amino-acid chain; its full sequence is Protein wntless (562 aa).

The Cytoplasmic segment spans residues 1 to 13; sequence MSGTILENLSGRK. A helical membrane pass occupies residues 14-34; that stretch reads LSILVSSLMLCQVACFLMGGL. The Lumenal segment spans residues 35–239; the sequence is YAPVPAGHQT…AIHQNGGFTQ (205 aa). N-linked (GlcNAc...) asparagine glycosylation is found at asparagine 58 and asparagine 103. A helical membrane pass occupies residues 240–260; sequence VWLLLKTLLFPFVVGIMIWFW. Residues 261 to 270 are Cytoplasmic-facing; that stretch reads RRVHILQRSP. The chain crosses the membrane as a helical span at residues 271 to 291; the sequence is ALLEYMLLYLGGALSFLNLPL. At 292–311 the chain is on the lumenal side; sequence EYLTLSIEMPYMLLLSDVRQ. Residues 312 to 332 traverse the membrane as a helical segment; that stretch reads GIFYAMLLSFWLVFAGEHMLI. Topologically, residues 333–344 are cytoplasmic; it reads QDTPNKSTIRSR. A helical transmembrane segment spans residues 345–365; it reads YWKHLSAVVVGCISLFVFDIC. At 366-390 the chain is on the lumenal side; that stretch reads ERGVQLRNPFYSIWTTPLGAKVAMS. Residues 391–411 traverse the membrane as a helical segment; sequence FIVLAGVSAAIYFLFLCFMVW. At 412–441 the chain is on the cytoplasmic side; sequence KVFKDIGDKRTSLPSMSQARRLHYEGLIYR. Residues 442 to 462 traverse the membrane as a helical segment; it reads FKFLMLATLLCAGLTVAGFIM. Residues 463 to 482 are Lumenal-facing; the sequence is GQMAEGHWKWNEDIEIQLTS. Residues 483-503 form a helical membrane-spanning segment; that stretch reads AFLTGVYGMWNIYIFALIILY. At 504–562 the chain is on the cytoplasmic side; sequence APSHKQWPTMRHSDETTQSNENIVASAASEEIEFSNLPSDSNPSEISSLTSFTRKVAFD.

Belongs to the wntless family. Interacts with wg; in the Golgi. Interacts with Vps35, a component of the retromer complex; wls stability is regulated by Vps35.

Its subcellular location is the presynaptic cell membrane. The protein localises to the postsynaptic cell membrane. It is found in the cell membrane. The protein resides in the endoplasmic reticulum membrane. It localises to the endosome membrane. Its subcellular location is the golgi apparatus membrane. Functionally, a segment polarity gene required for wingless (wg)-dependent patterning processes, acting in both wg-sending cells and wg-target cells. In non-neuronal cells wls directs wg secretion. The wls traffic loop encompasses the Golgi, the cell surface, an endocytic compartment and a retrograde route leading back to the Golgi, and involves clathrin-mediated endocytosis and the retromer complex (a conserved protein complex consisting of Vps35 and Vps26). In neuronal cells (the larval motorneuron NMJ), the wg signal moves across the synapse via the release of wls-containing exosome-like vesicles. Postsynaptic wls is required for the trafficking of fz2 through the fz2-interacting protein Grip. The chain is Protein wntless from Drosophila virilis (Fruit fly).